Reading from the N-terminus, the 145-residue chain is 3-hydroxyacyl-[acyl-carrier-protein] dehydratase FabZ (145 aa).

His-48 is an active-site residue.

The protein belongs to the thioester dehydratase family. FabZ subfamily.

It localises to the cytoplasm. It catalyses the reaction a (3R)-hydroxyacyl-[ACP] = a (2E)-enoyl-[ACP] + H2O. Involved in unsaturated fatty acids biosynthesis. Catalyzes the dehydration of short chain beta-hydroxyacyl-ACPs and long chain saturated and unsaturated beta-hydroxyacyl-ACPs. The polypeptide is 3-hydroxyacyl-[acyl-carrier-protein] dehydratase FabZ (Campylobacter hominis (strain ATCC BAA-381 / DSM 21671 / CCUG 45161 / LMG 19568 / NCTC 13146 / CH001A)).